The chain runs to 218 residues: Probable chemoreceptor glutamine deamidase CheD (218 aa).

The protein belongs to the CheD family.

The enzyme catalyses L-glutaminyl-[protein] + H2O = L-glutamyl-[protein] + NH4(+). In terms of biological role, probably deamidates glutamine residues to glutamate on methyl-accepting chemotaxis receptors (MCPs), playing an important role in chemotaxis. This is Probable chemoreceptor glutamine deamidase CheD from Saccharophagus degradans (strain 2-40 / ATCC 43961 / DSM 17024).